A 153-amino-acid chain; its full sequence is Bud site selection protein 25 (153 aa).

Functionally, involved in bud site selection. Required for resistance to the DNA-damaging agent methyl methanesulfonate (MMS). The sequence is that of Bud site selection protein 25 from Saccharomyces cerevisiae (strain ATCC 204508 / S288c) (Baker's yeast).